The chain runs to 552 residues: Acyl-CoA synthetase FUM10 (552 aa).

183–194 (ELFTSGTTGAPK) serves as a coordination point for AMP. The tract at residues 463-536 (EIEHVARLHD…QEIPYNRTGK (74 aa)) is AMP-binding.

Belongs to the ATP-dependent AMP-binding enzyme family.

It functions in the pathway mycotoxin biosynthesis. Its function is as follows. Acyl-CoA synthetase; part of the gene cluster that mediates the biosynthesis of fumonisins B1 (FB1), B2 (FB2), B3 (FB3), and B4 (FB4), which are carcinogenic mycotoxins. Within the pathway, FUM10 is involved the addition of the tricarballylic moieties to the carbon backbone. FUM10 catalyzes the CoA activation of citrate to form tricarballylic acid. The biosynthesis starts with the FUM1-catalyzed carbon chain assembly from one molecule of acetyl-CoA, eight molecules of malonyl-CoA, and two molecules of methionine (in S-adenosyl form). The C18 polyketide chain is released from the enzyme by a nucleophilic attack of a carbanion, which is derived from R-carbon of alanine by decarboxylation, on the carbonyl carbon of polyketide acyl chain. This step is catalyzed by the pyridoxal 5'-phosphate-dependent aminoacyl transferase FUM8. The resultant 3-keto intermediate is then stereospecifically reduced to a 3-hydroxyl product by reductase FUM13. Subsequent oxidations at C-10 by the cytochrome P450 monooxygenase FUM2, C-14 and C-15 by FUM6, FUM12 or FUM15, tricarballylic esterification of the hydroxyl groups on C-14 and C-15 by acyltransferase FUM14, and C-5 hydroxylation by 2-keto-glutarate-dependent dioxygenase FUM3 furnish the biosynthesis of fumonisins. The tricarballylic moieties are most likely derived from the citric acid cycle, and their addition to the carbon backbone may involve FUM7, FUM10, FUM11 and FUM14. This is Acyl-CoA synthetase FUM10 from Gibberella moniliformis (strain M3125 / FGSC 7600) (Maize ear and stalk rot fungus).